We begin with the raw amino-acid sequence, 78 residues long: U-scoloptoxin(04)-Er1b (78 aa).

Residues 1–24 (MTRHLIFAAVLLVCLFVCWNAVGA) form the signal peptide. Positions 25 to 28 (QDAR) are excised as a propeptide.

Belongs to the scoloptoxin-04 family. In terms of processing, contains 2 disulfide bonds. In terms of tissue distribution, expressed by the venom gland.

The protein localises to the secreted. This is U-scoloptoxin(04)-Er1b from Ethmostigmus rubripes (Giant centipede).